Consider the following 393-residue polypeptide: uncharacterized protein (393 aa).

A Flavodoxin-like domain is found at 250–389; it reads AVIVYDTMYN…KCYEFGKRLA (140 aa).

This is an uncharacterized protein from Methanocaldococcus jannaschii (strain ATCC 43067 / DSM 2661 / JAL-1 / JCM 10045 / NBRC 100440) (Methanococcus jannaschii).